Consider the following 129-residue polypeptide: Ig lambda-1 chain V region S43 (129 aa).

An N-terminal signal peptide occupies residues 1–19 (MAWISLILSLLALSSGAIS). Gln20 bears the Pyrrolidone carboxylic acid mark. Residues 20 to 125 (QAVVTQESAL…HWVFGGGTKL (106 aa)) enclose the Ig-like domain.

The polypeptide is Ig lambda-1 chain V region S43 (Mus musculus (Mouse)).